The primary structure comprises 380 residues: Protein GOLM2 (380 aa).

Methionine 1 bears the N-acetylmethionine mark. Residues 1-14 lie on the Cytoplasmic side of the membrane; the sequence is MVGFGANRRAGRLP. A helical; Signal-anchor for type II membrane protein transmembrane segment spans residues 15 to 35; it reads SLVLAVLLVVIAVLAFNYWSI. Positions 35-195 form a coiled coil; it reads ISSRHVLLQE…QFLQEQKQEA (161 aa). Residues 36 to 380 lie on the Lumenal side of the membrane; that stretch reads SSRHVLLQEE…YGKQRFNDAL (345 aa). 2 stretches are compositionally biased toward basic and acidic residues: residues 192-212 and 227-247; these read KQEA…DNHA and KNEE…KRGG. The tract at residues 192-254 is disordered; sequence KQEAHKFESK…RGGDAGMPGI (63 aa). Phosphoserine is present on residues serine 233 and serine 275. Residues 280–380 are disordered; it reads ESHQVISHLP…YGKQRFNDAL (101 aa). The segment covering 305–321 has biased composition (polar residues); that stretch reads NHNGNSRTSKQNPSNPL. Residues 344-380 show a composition bias toward basic and acidic residues; sequence ATKDRAGDFHKLKQNDEERELQMDPADYGKQRFNDAL.

Belongs to the GOLM family.

The protein resides in the membrane. The sequence is that of Protein GOLM2 (GOLM2) from Bos taurus (Bovine).